The sequence spans 158 residues: SsrA-binding protein (158 aa).

The protein belongs to the SmpB family.

The protein resides in the cytoplasm. In terms of biological role, required for rescue of stalled ribosomes mediated by trans-translation. Binds to transfer-messenger RNA (tmRNA), required for stable association of tmRNA with ribosomes. tmRNA and SmpB together mimic tRNA shape, replacing the anticodon stem-loop with SmpB. tmRNA is encoded by the ssrA gene; the 2 termini fold to resemble tRNA(Ala) and it encodes a 'tag peptide', a short internal open reading frame. During trans-translation Ala-aminoacylated tmRNA acts like a tRNA, entering the A-site of stalled ribosomes, displacing the stalled mRNA. The ribosome then switches to translate the ORF on the tmRNA; the nascent peptide is terminated with the 'tag peptide' encoded by the tmRNA and targeted for degradation. The ribosome is freed to recommence translation, which seems to be the essential function of trans-translation. In Hydrogenovibrio crunogenus (strain DSM 25203 / XCL-2) (Thiomicrospira crunogena), this protein is SsrA-binding protein.